A 394-amino-acid polypeptide reads, in one-letter code: Keratin, type I cuticular Ha4 (394 aa).

The tract at residues 1-56 is head; the sequence is MSYSCCLPSLGCRTSCSSRPCVPPSCHGYTLPGACNIPANVSNCNWFCEGSFNGSE. Residues 56-367 enclose the IF rod domain; it reads EKETMQFLND…SLLESEDCKL (312 aa). The coil 1A stretch occupies residues 57 to 91; the sequence is KETMQFLNDRLASYLEKVRQLERDNAELEKLIQER. Residues 92–102 are linker 1; that stretch reads SQQQEPLLCPS. The segment at 103-203 is coil 1B; the sequence is YQSYFKTIEE…HEEEVNTLRS (101 aa). The linker 12 stretch occupies residues 204–219; that stretch reads QLGDRLNVEVDTAPTV. A coil 2 region spans residues 220–363; sequence DLNQVLNETR…NTYRSLLESE (144 aa). Positions 364-394 are tail; that stretch reads DCKLPCNPCATTNASGNSCGPCGTSQKGCCN.

The protein belongs to the intermediate filament family. As to expression, expressed in the hair follicles.

This Homo sapiens (Human) protein is Keratin, type I cuticular Ha4 (KRT34).